We begin with the raw amino-acid sequence, 256 residues long: NAD-dependent protein deacetylase (256 aa).

In terms of domain architecture, Deacetylase sirtuin-type spans 1 to 254; the sequence is MDISYHEKIS…KDILDVIKSE (254 aa). The NAD(+) site is built by Ala28, Thr32, Phe39, Arg40, Gln105, Ile107, Asp108, and His123. Position 39 (Phe39) interacts with nicotinamide. 2 residues coordinate nicotinamide: Ile107 and Asp108. His123 (proton acceptor) is an active-site residue. Residues Cys131, Cys134, Cys156, and Cys159 each coordinate Zn(2+). Residues Thr197, Ser198, and Asn222 each coordinate NAD(+).

The protein belongs to the sirtuin family. Class U subfamily. Zn(2+) is required as a cofactor.

It is found in the cytoplasm. It catalyses the reaction N(6)-acetyl-L-lysyl-[protein] + NAD(+) + H2O = 2''-O-acetyl-ADP-D-ribose + nicotinamide + L-lysyl-[protein]. In terms of biological role, NAD-dependent protein deacetylase which modulates the activities of several enzymes which are inactive in their acetylated form. The sequence is that of NAD-dependent protein deacetylase from Thermodesulfovibrio yellowstonii (strain ATCC 51303 / DSM 11347 / YP87).